The chain runs to 442 residues: Na(+)/H(+) antiporter NhaA (442 aa).

The next 11 helical transmembrane spans lie at 32 to 52 (IGGG…NSPW), 73 to 93 (LTLA…VAGL), 111 to 131 (AVPV…YALV), 139 to 159 (AGWA…LAVI), 170 to 190 (FLLT…AVVY), 193 to 213 (HLSI…TLLV), 234 to 254 (VHAS…AVPV), 284 to 304 (VAVP…LSGL), 316 to 336 (VVLG…FLVA), 352 to 372 (VLGL…IGEL), and 383 to 403 (HVKI…AVVL). Residues 423 to 435 (HDGIPDVYQDLHR) show a composition bias toward basic and acidic residues. Positions 423–442 (HDGIPDVYQDLHRSSPRPWG) are disordered.

It belongs to the NhaA Na(+)/H(+) (TC 2.A.33) antiporter family.

It localises to the cell membrane. It catalyses the reaction Na(+)(in) + 2 H(+)(out) = Na(+)(out) + 2 H(+)(in). Na(+)/H(+) antiporter that extrudes sodium in exchange for external protons. In Frankia casuarinae (strain DSM 45818 / CECT 9043 / HFP020203 / CcI3), this protein is Na(+)/H(+) antiporter NhaA.